A 62-amino-acid polypeptide reads, in one-letter code: Small, acid-soluble spore protein A (62 aa).

It belongs to the alpha/beta-type SASP family.

Functionally, SASP are bound to spore DNA. They are double-stranded DNA-binding proteins that cause DNA to change to an a-like conformation. They protect the DNA backbone from chemical and enzymatic cleavage and are thus involved in dormant spore's high resistance to UV light. The sequence is that of Small, acid-soluble spore protein A (sasP-A) from Priestia megaterium (Bacillus megaterium).